A 340-amino-acid chain; its full sequence is Glyceraldehyde-3-phosphate dehydrogenase (340 aa).

Residues 13–14 (TI) and Gly-112 each bind NAD(+). 141-143 (SCN) contributes to the D-glyceraldehyde 3-phosphate binding site. Catalysis depends on Cys-142, which acts as the Nucleophile. Arg-170 lines the NAD(+) pocket. 196–197 (HG) serves as a coordination point for D-glyceraldehyde 3-phosphate. Gln-302 is an NAD(+) binding site.

This sequence belongs to the glyceraldehyde-3-phosphate dehydrogenase family. In terms of assembly, homotetramer.

The protein localises to the cytoplasm. The catalysed reaction is D-glyceraldehyde 3-phosphate + phosphate + NADP(+) = (2R)-3-phospho-glyceroyl phosphate + NADPH + H(+). It carries out the reaction D-glyceraldehyde 3-phosphate + phosphate + NAD(+) = (2R)-3-phospho-glyceroyl phosphate + NADH + H(+). It functions in the pathway carbohydrate degradation; glycolysis; pyruvate from D-glyceraldehyde 3-phosphate: step 1/5. This is Glyceraldehyde-3-phosphate dehydrogenase (gap) from Archaeoglobus fulgidus (strain ATCC 49558 / DSM 4304 / JCM 9628 / NBRC 100126 / VC-16).